A 185-amino-acid chain; its full sequence is Ribosome-recycling factor (185 aa).

Residues 141-160 form a disordered region; it reads RIQKDGEAGEDEVGRAEKEL.

This sequence belongs to the RRF family.

The protein localises to the cytoplasm. Functionally, responsible for the release of ribosomes from messenger RNA at the termination of protein biosynthesis. May increase the efficiency of translation by recycling ribosomes from one round of translation to another. In Rhodococcus jostii (strain RHA1), this protein is Ribosome-recycling factor.